Reading from the N-terminus, the 235-residue chain is Small ribosomal subunit protein uS2 (235 aa).

This sequence belongs to the universal ribosomal protein uS2 family.

In Thermoanaerobacter sp. (strain X514), this protein is Small ribosomal subunit protein uS2.